The primary structure comprises 68 residues: UPF0434 protein H16_A0605 (68 aa).

It belongs to the UPF0434 family.

In Cupriavidus necator (strain ATCC 17699 / DSM 428 / KCTC 22496 / NCIMB 10442 / H16 / Stanier 337) (Ralstonia eutropha), this protein is UPF0434 protein H16_A0605.